The primary structure comprises 267 residues: GTP cyclohydrolase FolE2 (267 aa).

The protein belongs to the GTP cyclohydrolase IV family.

The catalysed reaction is GTP + H2O = 7,8-dihydroneopterin 3'-triphosphate + formate + H(+). It participates in cofactor biosynthesis; 7,8-dihydroneopterin triphosphate biosynthesis; 7,8-dihydroneopterin triphosphate from GTP: step 1/1. In terms of biological role, converts GTP to 7,8-dihydroneopterin triphosphate. The polypeptide is GTP cyclohydrolase FolE2 (Geobacter sp. (strain M21)).